The primary structure comprises 298 residues: MIIKRREYMRIADYSVTKAVLDRHGFTFKKSFGQNFLTDTNILQKIVDTAEIDQNVNVIEIGPGIGALTEFLAENAAEVMAFEIDDRLVPILADTLRDFDNVQVVNQDILKADLQTQIKQFKNPDLPIKVVANLPYYITTPILMHLIESKIPFQEFVVMMQREVADRISAEPNTKAYGSLSIAVQYYMTAKVAFIVPRTVFVPAPNVDSAILKMVRRDQPLIEVKDEDFFFRVSRLSFVHRRKTLWNNLTSHFGKSEDIKTKLEKGLALADIKPSIRGEALSIQDFGKLADALKEVGL.

6 residues coordinate S-adenosyl-L-methionine: Asn-35, Leu-37, Gly-62, Glu-83, Asp-108, and Asn-133.

This sequence belongs to the class I-like SAM-binding methyltransferase superfamily. rRNA adenine N(6)-methyltransferase family. RsmA subfamily.

The protein resides in the cytoplasm. The catalysed reaction is adenosine(1518)/adenosine(1519) in 16S rRNA + 4 S-adenosyl-L-methionine = N(6)-dimethyladenosine(1518)/N(6)-dimethyladenosine(1519) in 16S rRNA + 4 S-adenosyl-L-homocysteine + 4 H(+). Functionally, specifically dimethylates two adjacent adenosines (A1518 and A1519) in the loop of a conserved hairpin near the 3'-end of 16S rRNA in the 30S particle. May play a critical role in biogenesis of 30S subunits. In Streptococcus pyogenes serotype M2 (strain MGAS10270), this protein is Ribosomal RNA small subunit methyltransferase A.